Reading from the N-terminus, the 331-residue chain is Proton-translocating ferredoxin:NAD(+) oxidoreductase complex subunit D (331 aa).

3 helical membrane-spanning segments follow: residues 23-43 (ESVS…AVFG), 44-64 (VFNF…AAVV), and 84-106 (AFLT…MVAI). Residue threonine 163 is modified to FMN phosphoryl threonine. 4 helical membrane-spanning segments follow: residues 196-216 (NGSI…YLIY), 226-246 (VVMI…TGIF), 251-271 (VFHM…TDMV), and 273-293 (IPMT…LTSL).

The protein belongs to the NqrB/RnfD family. In terms of assembly, the complex is composed of six subunits: RnfA, RnfB, RnfC, RnfD, RnfE and RnfG. FMN is required as a cofactor.

It localises to the cell membrane. Its function is as follows. Part of a membrane-bound complex that couples electron transfer with translocation of ions across the membrane. Couples electron transfer from reduced ferredoxin to NAD(+) with translocation of H(+) out of the cell. Essential for energy conservation during autotrophic growth. Contributes to ATP synthesis during heterotrophic growth. The sequence is that of Proton-translocating ferredoxin:NAD(+) oxidoreductase complex subunit D from Clostridium ljungdahlii (strain ATCC 55383 / DSM 13528 / PETC).